Here is a 510-residue protein sequence, read N- to C-terminus: ATP synthase subunit alpha (510 aa).

169–176 (GDRQTGKT) contributes to the ATP binding site.

Belongs to the ATPase alpha/beta chains family. In terms of assembly, F-type ATPases have 2 components, CF(1) - the catalytic core - and CF(0) - the membrane proton channel. CF(1) has five subunits: alpha(3), beta(3), gamma(1), delta(1), epsilon(1). CF(0) has three main subunits: a(1), b(2) and c(9-12). The alpha and beta chains form an alternating ring which encloses part of the gamma chain. CF(1) is attached to CF(0) by a central stalk formed by the gamma and epsilon chains, while a peripheral stalk is formed by the delta and b chains.

It localises to the cell inner membrane. It catalyses the reaction ATP + H2O + 4 H(+)(in) = ADP + phosphate + 5 H(+)(out). Functionally, produces ATP from ADP in the presence of a proton gradient across the membrane. The alpha chain is a regulatory subunit. The sequence is that of ATP synthase subunit alpha from Nitrobacter winogradskyi (strain ATCC 25391 / DSM 10237 / CIP 104748 / NCIMB 11846 / Nb-255).